A 260-amino-acid polypeptide reads, in one-letter code: MKVLRKGDRGDEVCQLQTLLNLCGYDVGKPDGIFGNNTFNQVVKFQKDNCLDSDGIVGKNTWAELFSKYSPPIPYKTIPMPTANKSRAAATPVMNAVENATGVRSQLLLTFASIESAFDYEIKAKTSSATGWFQFLTGTWKTMIENYGMKYGVLTDPTGALRKDPRISALMGAELIKENMNILRPVLKREPTDTDLYLAHFFGPGAARRFLTTGQNELAATHFPKEAQANPSIFYNKDGSPKTIQEVYNLMDGKVAAHRK.

The interval 9–69 (RGDEVCQLQT…NTWAELFSKY (61 aa)) is peptidoglycan binding. Residues 106–210 (QLLLTFASIE…FFGPGAARRF (105 aa)) form a peptidoglycan hydrolase activity region. Residue glutamate 115 is part of the active site.

Belongs to the glycosyl hydrolase 23 family.

It carries out the reaction Exolytic cleavage of the (1-&gt;4)-beta-glycosidic linkage between N-acetylmuramic acid (MurNAc) and N-acetylglucosamine (GlcNAc) residues in peptidoglycan, from either the reducing or the non-reducing ends of the peptidoglycan chains, with concomitant formation of a 1,6-anhydrobond in the MurNAc residue.. Endolysin with transglycosylase activity that degrades host peptidoglycans and participates in the sequential events which lead to the programmed host cell lysis releasing the mature viral particles. Binds and cleaves peptidoglycans found in Gram-negative bacteria and that contain the A1 chemotype peptidoglycan and fully N-acetylated glucosamine. The chain is Endolysin gp144 (PHIKZ144) from Pseudomonas phage phiKZ.